Reading from the N-terminus, the 159-residue chain is Nascent polypeptide-associated complex subunit beta (159 aa).

Disordered regions lie at residues 1–39 and 121–159; these read MDMEKLKRMQARGGVRTGDGKGTPRRKVKNVHKSTGMDD and ESYQSMQKAEGGEDKKDDDEDDDDIPDLVEGENFEDKVE. Positions 23–32 are enriched in basic residues; it reads TPRRKVKNVH. One can recognise an NAC-A/B domain in the interval 36-101; that stretch reads GMDDKKLQTS…GEDKELTELV (66 aa). The segment covering 136 to 153 has biased composition (acidic residues); sequence KDDDEDDDDIPDLVEGEN.

Belongs to the NAC-beta family. As to quaternary structure, part of the nascent polypeptide-associated complex (NAC), consisting of EGD2 and EGD1. NAC associates with ribosomes via EGD1.

The protein localises to the cytoplasm. The protein resides in the nucleus. Component of the nascent polypeptide-associated complex (NAC), a dynamic component of the ribosomal exit tunnel, protecting the emerging polypeptides from interaction with other cytoplasmic proteins to ensure appropriate nascent protein targeting. The NAC complex also promotes mitochondrial protein import by enhancing productive ribosome interactions with the outer mitochondrial membrane and blocks the inappropriate interaction of ribosomes translating non-secretory nascent polypeptides with translocation sites in the membrane of the endoplasmic reticulum. EGD1 may act as a transcription factor that exert a negative effect on the expression of several genes that are transcribed by RNA polymerase II. The sequence is that of Nascent polypeptide-associated complex subunit beta (egd1) from Botryotinia fuckeliana (strain B05.10) (Noble rot fungus).